We begin with the raw amino-acid sequence, 247 residues long: Small ribosomal subunit protein uS2 (247 aa).

Belongs to the universal ribosomal protein uS2 family.

The protein is Small ribosomal subunit protein uS2 of Ralstonia nicotianae (strain ATCC BAA-1114 / GMI1000) (Ralstonia solanacearum).